Consider the following 397-residue polypeptide: Acetate kinase (397 aa).

Asn-8 serves as a coordination point for Mg(2+). Lys-15 provides a ligand contact to ATP. Arg-89 provides a ligand contact to substrate. Asp-146 serves as the catalytic Proton donor/acceptor. ATP-binding positions include 206 to 210 (HLGNG), 281 to 283 (DLR), and 329 to 333 (GVGEN). Glu-382 serves as a coordination point for Mg(2+).

Belongs to the acetokinase family. As to quaternary structure, homodimer. Mg(2+) is required as a cofactor. Requires Mn(2+) as cofactor.

The protein resides in the cytoplasm. The enzyme catalyses acetate + ATP = acetyl phosphate + ADP. The protein operates within metabolic intermediate biosynthesis; acetyl-CoA biosynthesis; acetyl-CoA from acetate: step 1/2. Its function is as follows. Catalyzes the formation of acetyl phosphate from acetate and ATP. Can also catalyze the reverse reaction. The sequence is that of Acetate kinase from Bacillus cereus (strain ATCC 14579 / DSM 31 / CCUG 7414 / JCM 2152 / NBRC 15305 / NCIMB 9373 / NCTC 2599 / NRRL B-3711).